A 98-amino-acid chain; its full sequence is Small ribosomal subunit protein uS19 (98 aa).

2 disordered regions span residues 1–30 (MARS…KKSV) and 78–98 (RTFH…PAKK). Over residues 9 to 24 (PFADKHLTKKVEDANK) the composition is skewed to basic and acidic residues.

It belongs to the universal ribosomal protein uS19 family.

In terms of biological role, protein S19 forms a complex with S13 that binds strongly to the 16S ribosomal RNA. This is Small ribosomal subunit protein uS19 from Anaeromyxobacter dehalogenans (strain 2CP-C).